A 1845-amino-acid chain; its full sequence is Proteasome adapter and scaffold protein ECM29 (1845 aa).

Ala-2 is subject to N-acetylalanine. HEAT repeat units lie at residues 28-65, 107-144, 162-205, 326-362, 387-426, 429-466, 469-507, 683-720, 721-759, 783-820, 829-868, 870-907, 931-969, 975-1012, 1013-1050, 1112-1149, 1152-1189, 1194-1231, 1243-1281, 1285-1323, 1348-1386, 1390-1427, 1517-1554, 1558-1595, 1605-1642, 1646-1683, and 1779-1822; these read TDEQ…LVHL, YPRL…LIPT, NLAE…QGSS, RDPV…YDGL, PEIK…VGKL, RMPH…LSMM, AYST…ASTV, YPEK…YSVV, VSTV…LGFT, TLPD…LGEI, PSEG…LGYF, VGDG…ITSA, AGAK…LLSL, THKE…LGLV, YELG…VVFQ, AGEQ…WNAL, DKSM…LNDL, PLDD…LKTL, KGAA…LVKI, AGAM…TEQE, LQYL…IVSL, CPQD…MGHL, SFGG…MASI, TSSL…IACV, KSVP…AADI, TKED…ENEK, and TYSS…LATM. A compositionally biased stretch (low complexity) spans 193 to 207; the sequence is QSRQNSSSAQGSSSN. The interval 193–217 is disordered; sequence QSRQNSSSAQGSSSNSGGGSGIPQP. Residue Ser-830 is modified to Phosphoserine. Residue Thr-836 is modified to Phosphothreonine. Lys-1039 participates in a covalent cross-link: Glycyl lysine isopeptide (Lys-Gly) (interchain with G-Cter in SUMO1).

This sequence belongs to the ECM29 family. Non-stoichiometric component of the proteasome; associates with the 26S proteasome. Interacts (via N-terminus) with VPS11, VPS26A, VPS36, RAB11FIP4 and RABEP1. Interacts (via C-terminus) with DCTN1, DCTN2, KIF5B, MYH7, MYH10, MYO10 and ARF6.

The protein localises to the endoplasmic reticulum. Its subcellular location is the endoplasmic reticulum-Golgi intermediate compartment. It is found in the endosome. It localises to the cytoplasm. The protein resides in the cytoskeleton. The protein localises to the microtubule organizing center. Its subcellular location is the centrosome. It is found in the nucleus. It localises to the multivesicular body. The protein resides in the cytoplasmic vesicle. In terms of biological role, adapter/scaffolding protein that binds to the 26S proteasome, motor proteins and other compartment specific proteins. May couple the proteasome to different compartments including endosome, endoplasmic reticulum and centrosome. May play a role in ERAD and other enhanced proteolysis. Promotes proteasome dissociation under oxidative stress. In Homo sapiens (Human), this protein is Proteasome adapter and scaffold protein ECM29.